The following is a 477-amino-acid chain: MAGKTLYDKLWDAHEVKRRDDGSSLIYIDRHIIHEVTSPQAFEGLRLASRKPWRIDTNIATPDHNVPTTPERKGGIEAIVDQVSRLQVQTLDENCDEYGIVEFKMNDERQGIVHVISPEQGATLPGMTVVCGDSHTSTHGAFGALAHGIGTSEVEHVLATQCLVAKKMKNMLVRVEGELPAGVTAKDIVLAVIGKIGTAGGNGHAMEFAGSAIRELSMEGRMTICNMSIEAGARVGLVAVDDTTVNYVEGRPYAPKGEQWKQAVASWKGLVSDADAVFDTLVELDAAQIKPQVSWGTSPEMVLAVDQCVPDPAAEADLIKRGSIERALKYMGLSANQAITDIKLDRVFIGSCTNSRIEDLRAAAEIAKGRKVAANVKQALVVPGSGLVKAQAEREGLDKIFLEAGFEWREPGCSMCLAMNPDRLESGEHCASTSNRNFEGRQGAGGRTHLVSPAMAAAAAVTGHFIDVRELIQGSAA.

[4Fe-4S] cluster-binding residues include Cys352, Cys413, and Cys416.

It belongs to the aconitase/IPM isomerase family. LeuC type 1 subfamily. In terms of assembly, heterodimer of LeuC and LeuD. [4Fe-4S] cluster serves as cofactor.

It carries out the reaction (2R,3S)-3-isopropylmalate = (2S)-2-isopropylmalate. The protein operates within amino-acid biosynthesis; L-leucine biosynthesis; L-leucine from 3-methyl-2-oxobutanoate: step 2/4. Functionally, catalyzes the isomerization between 2-isopropylmalate and 3-isopropylmalate, via the formation of 2-isopropylmaleate. The chain is 3-isopropylmalate dehydratase large subunit from Pseudomonas entomophila (strain L48).